The sequence spans 254 residues: tRNA (guanine-N(1)-)-methyltransferase (254 aa).

S-adenosyl-L-methionine is bound by residues G113 and 133–138; that span reads LGDFVL.

Belongs to the RNA methyltransferase TrmD family. In terms of assembly, homodimer.

The protein resides in the cytoplasm. It carries out the reaction guanosine(37) in tRNA + S-adenosyl-L-methionine = N(1)-methylguanosine(37) in tRNA + S-adenosyl-L-homocysteine + H(+). Specifically methylates guanosine-37 in various tRNAs. The sequence is that of tRNA (guanine-N(1)-)-methyltransferase from Herpetosiphon aurantiacus (strain ATCC 23779 / DSM 785 / 114-95).